A 324-amino-acid polypeptide reads, in one-letter code: Rho crystallin (324 aa).

Position 2 is an N-acetylthreonine (T2). Residue 218–281 (SVLGSHRDRN…SFTPARIKQN (64 aa)) participates in NADP(+) binding.

The protein belongs to the aldo/keto reductase family. Monomer.

This is Rho crystallin from Rana temporaria (European common frog).